A 158-amino-acid chain; its full sequence is MQGRLSAWLVKHELVHRSLGFDYQGIETLQIKPEDWYSIAVISYVYGYNYLRSQCAYDVAPGGLLASVYHLTRIQYGVDQPEEVCIKVFAPRRNPRIPSVFWIWKSADFQERESYDMLGISYENHPRLKRILMPESWIGWPLRKDYIAPNFYEIQDAH.

Belongs to the complex I 30 kDa subunit family. NDH is composed of at least 16 different subunits, 5 of which are encoded in the nucleus.

It is found in the plastid. Its subcellular location is the chloroplast thylakoid membrane. It carries out the reaction a plastoquinone + NADH + (n+1) H(+)(in) = a plastoquinol + NAD(+) + n H(+)(out). It catalyses the reaction a plastoquinone + NADPH + (n+1) H(+)(in) = a plastoquinol + NADP(+) + n H(+)(out). Functionally, NDH shuttles electrons from NAD(P)H:plastoquinone, via FMN and iron-sulfur (Fe-S) centers, to quinones in the photosynthetic chain and possibly in a chloroplast respiratory chain. The immediate electron acceptor for the enzyme in this species is believed to be plastoquinone. Couples the redox reaction to proton translocation, and thus conserves the redox energy in a proton gradient. This Drimys granadensis protein is NAD(P)H-quinone oxidoreductase subunit J, chloroplastic.